The following is a 1098-amino-acid chain: PAN2-PAN3 deadenylation complex catalytic subunit PAN2 (1098 aa).

WD repeat units follow at residues 19-58 (ASKD…PFQL), 150-190 (TGFD…SVKS), 253-293 (PFPN…KLNV), and 300-338 (PASP…NFVN). Positions 340-466 (PAPLEEQDIP…SIFHLKSPTS (127 aa)) are linker. A disordered region spans residues 417–442 (RNISQPYQSLREPPGSNSNAPRFISE). Positions 466–839 (SVPHCYSRLQ…KPVIIVYSEP (374 aa)) constitute a USP domain. One can recognise an Exonuclease domain in the interval 894–1067 (IAIDAEFVVS…EDAYTALMLF (174 aa)). The a divalent metal cation site is built by Asp-897, Glu-899, Asp-1006, and Asp-1059.

Belongs to the peptidase C19 family. PAN2 subfamily. As to quaternary structure, forms a heterotrimer with an asymmetric homodimer of the regulatory subunit PAN3 to form the poly(A)-nuclease (PAN) deadenylation complex. A divalent metal cation is required as a cofactor.

Its subcellular location is the cytoplasm. It carries out the reaction Exonucleolytic cleavage of poly(A) to 5'-AMP.. With respect to regulation, positively regulated by the regulatory subunit PAN3. Its function is as follows. Catalytic subunit of the poly(A)-nuclease (PAN) deadenylation complex, one of two cytoplasmic mRNA deadenylases involved in mRNA turnover. PAN specifically shortens poly(A) tails of RNA and the activity is stimulated by poly(A)-binding protein PAB1. PAN deadenylation is followed by rapid degradation of the shortened mRNA tails by the CCR4-NOT complex. Deadenylated mRNAs are then degraded by two alternative mechanisms, namely exosome-mediated 3'-5' exonucleolytic degradation, or deadenylation-dependent mRNA decaping and subsequent 5'-3' exonucleolytic degradation by XRN1. May also be involved in post-transcriptional maturation of mRNA poly(A) tails. This Meyerozyma guilliermondii (strain ATCC 6260 / CBS 566 / DSM 6381 / JCM 1539 / NBRC 10279 / NRRL Y-324) (Yeast) protein is PAN2-PAN3 deadenylation complex catalytic subunit PAN2.